A 183-amino-acid polypeptide reads, in one-letter code: Putative 3-methyladenine DNA glycosylase (183 aa).

The protein belongs to the DNA glycosylase MPG family.

The protein is Putative 3-methyladenine DNA glycosylase of Rickettsia rickettsii (strain Iowa).